Reading from the N-terminus, the 278-residue chain is Tryptophan synthase alpha chain (278 aa).

Residues E50 and D61 each act as proton acceptor in the active site.

Belongs to the TrpA family. In terms of assembly, tetramer of two alpha and two beta chains.

It catalyses the reaction (1S,2R)-1-C-(indol-3-yl)glycerol 3-phosphate + L-serine = D-glyceraldehyde 3-phosphate + L-tryptophan + H2O. The protein operates within amino-acid biosynthesis; L-tryptophan biosynthesis; L-tryptophan from chorismate: step 5/5. The alpha subunit is responsible for the aldol cleavage of indoleglycerol phosphate to indole and glyceraldehyde 3-phosphate. The chain is Tryptophan synthase alpha chain from Rhodopseudomonas palustris (strain BisB5).